A 1110-amino-acid polypeptide reads, in one-letter code: Envelopment polyprotein (1110 aa).

A propeptide spanning residues 1–8 is cleaved from the precursor; it reads MALKETDA. Topologically, residues 1-290 are lumenal; that stretch reads MALKETDAKI…KYSKNIYKQT (290 aa). The Cell attachment site signature appears at 14–16; that stretch reads RGD. Residues Asn46 and Asn92 are each glycosylated (N-linked (GlcNAc...) asparagine; by host). Disulfide bonds link Cys90–Cys121 and Cys98–Cys132. A non-covalent dimerization region spans residues 153–171; it reads IDNKRKLSIGTKFYIIESL. An N-linked (GlcNAc...) asparagine; by host glycan is attached at Asn186. Residues Cys200 and Cys261 are joined by a disulfide bond. The chain crosses the membrane as a helical span at residues 291–342; that stretch reads ACINFSWFRLIMIALIVYFPIRYLVNKTSKTLFYGYDLLGLITYPILLLINY. The Cytoplasmic segment spans residues 343-459; sequence LWSYFPLKCK…VPGCDRFVTN (117 aa). The Lumenal segment spans residues 460 to 1044; that stretch reads RYDKCPEKDQ…HFGSFFDTVR (585 aa). N-linked (GlcNAc...) asparagine; by host glycans are attached at residues Asn566, Asn582, and Asn957. The chain crosses the membrane as a helical span at residues 1045–1065; the sequence is VVLLILFVFALAYLCSIVATM. Residues 1066–1110 are Cytoplasmic-facing; sequence CRGYVRNKSYKTKYIEDTNDYSLVSTSSGKDTITRRRPPLDFSGI. The interval 1091 to 1110 is disordered; sequence TSSGKDTITRRRPPLDFSGI.

This sequence belongs to the tospovirus envelope glycoprotein family. As to quaternary structure, homodimer; disulfide-linked. Heterodimer with Glycoprotein C. Interacts with nucleoprotein. In terms of assembly, heterodimer with Glycoprotein N. Interacts with nucleoprotein. Post-translationally, specific enzymatic cleavages in vivo yield mature proteins including Glycoprotein N and Glycoprotein C. In terms of processing, glycosylated with O-linked glycans. Glycosylation is essential for proper subcellular location. Cleaved at acidic pH.

The protein resides in the virion membrane. Its subcellular location is the host Golgi apparatus membrane. It is found in the host endoplasmic reticulum membrane. Forms the spikes present at the surface of the virion together with Glycoprotein C. They are able to attach the virion to a cell receptor and to promote fusion of membranes after endocytosis of the virion. Plays a role in virus binding and/or entry into the vector midgut. Its function is as follows. Forms the spikes present at the surface of the virion together with Glycoprotein N. They are able to attach the virion to a cell receptor and to promote fusion of membranes after endocytosis of the virion. Probable class II fusion protein. The protein is Envelopment polyprotein (GP) of Impatiens necrotic spot virus (INSV).